A 359-amino-acid polypeptide reads, in one-letter code: Type-1 angiotensin II receptor (359 aa).

At 1–25 (MILNSSTEDGIKRIQDDCPKAGRHS) the chain is on the extracellular side. Residue Asn4 is glycosylated (N-linked (GlcNAc...) asparagine). Residues Gln15 and Asp17 each coordinate angiotensin II. 2 cysteine pairs are disulfide-bonded: Cys18/Cys274 and Cys101/Cys180. The chain crosses the membrane as a helical span at residues 26-55 (YIFVMIPTLYSIIFVVGIFGNSLVVIVIYF). At 56 to 61 (YMKLKT) the chain is on the cytoplasmic side. Residues 62 to 89 (VASVFLLNLALADICFLLTLPLWAVYTA) form a helical membrane-spanning segment. At 90–98 (MEYRWPFGN) the chain is on the extracellular side. A helical transmembrane segment spans residues 99-125 (YLCKIASASVSFNLYASVFLLTCLSID). Residues 126 to 141 (RYLAIVHPMKSRLRRT) are Cytoplasmic-facing. Residues 142–165 (MLVAKVTCVIIWLMAGLASLPAVI) traverse the membrane as a helical segment. The Extracellular segment spans residues 166–190 (HRNVFFIENTNITVCAFHYESQNST). Residue Arg167 coordinates angiotensin II. N-linked (GlcNAc...) asparagine glycosylation is present at Asn176. Angiotensin II is bound by residues Phe182, His183, and Tyr184. Asn188 carries an N-linked (GlcNAc...) asparagine glycan. A helical transmembrane segment spans residues 191–216 (LPIGLGLTKNILGFMFPFLIILTSYT). Position 199 (Lys199) interacts with angiotensin II. At 217 to 239 (LIWKALKKAYEIQKNKPRNDDIF) the chain is on the cytoplasmic side. Residues 240–268 (KIIMAIVLFFFFSWVPHQIFTFLDVLIQL) form a helical membrane-spanning segment. Residues 269–278 (GIIHDCKISD) lie on the Extracellular side of the membrane. A helical membrane pass occupies residues 279–304 (IVDTAMPITICIAYFNNCLNPLFYGF). At 305–359 (LGKKFKKYFLQLLKYIPPKAKSHSTLSTKMSTLSYRPSDNVSSSAKKPVQCFEVE) the chain is on the cytoplasmic side. Residues 337–349 (LSYRPSDNVSSSA) show a composition bias toward polar residues. A disordered region spans residues 337–359 (LSYRPSDNVSSSAKKPVQCFEVE). Cys355 carries the S-palmitoyl cysteine lipid modification.

The protein belongs to the G-protein coupled receptor 1 family. In terms of assembly, interacts with MAS1. Interacts with ARRB1. Interacts with FLNA (via filamin repeat 21); increases PKA-mediated phosphorylation of FLNA. In terms of processing, C-terminal Ser or Thr residues may be phosphorylated. In terms of tissue distribution, expressed in liver, kidney, adrenal gland, heart and colon.

Its subcellular location is the cell membrane. Functionally, receptor for angiotensin II, a vasoconstricting peptide, which acts as a key regulator of blood pressure and sodium retention by the kidney. The activated receptor in turn couples to G-alpha proteins G(q) (GNAQ, GNA11, GNA14 or GNA15) and thus activates phospholipase C and increases the cytosolic Ca(2+) concentrations, which in turn triggers cellular responses such as stimulation of protein kinase C. This Cavia porcellus (Guinea pig) protein is Type-1 angiotensin II receptor (AGTR1).